Here is a 410-residue protein sequence, read N- to C-terminus: Arginine deiminase (410 aa).

Cysteine 399 acts as the Amidino-cysteine intermediate in catalysis.

The protein belongs to the arginine deiminase family.

Its subcellular location is the cytoplasm. The enzyme catalyses L-arginine + H2O = L-citrulline + NH4(+). It functions in the pathway amino-acid degradation; L-arginine degradation via ADI pathway; carbamoyl phosphate from L-arginine: step 1/2. In Listeria monocytogenes serovar 1/2a (strain ATCC BAA-679 / EGD-e), this protein is Arginine deiminase.